A 278-amino-acid chain; its full sequence is MANYTAADIKALRERTGAGMMDVKKALDEADGDAEKAIEIIRVKGLKGATKREGRSAAEGLVAATVENGVGVMIELNCETDFVAKADKFIALGDVVLRAAVASGATDVDGLLASDYEGRTLGDYVTEEGALLGEKVAVRRLARVEGAFVDAYLHKTSKDLPAQVGVLLAVDADSADAKTAAHDIAVHTAAYSPTYLTREDVPAETVENERRIADETARAEGKPEQALPKIVEGRLTGFFKEIVLVDQPFAKDPKQTVGKVASDAGTNVTGFARFRVGN.

The segment at 80 to 83 (TDFV) is involved in Mg(2+) ion dislocation from EF-Tu.

Belongs to the EF-Ts family.

It is found in the cytoplasm. In terms of biological role, associates with the EF-Tu.GDP complex and induces the exchange of GDP to GTP. It remains bound to the aminoacyl-tRNA.EF-Tu.GTP complex up to the GTP hydrolysis stage on the ribosome. This chain is Elongation factor Ts, found in Micrococcus luteus (strain ATCC 4698 / DSM 20030 / JCM 1464 / CCM 169 / CCUG 5858 / IAM 1056 / NBRC 3333 / NCIMB 9278 / NCTC 2665 / VKM Ac-2230) (Micrococcus lysodeikticus).